We begin with the raw amino-acid sequence, 445 residues long: Scarecrow-like protein 18 (445 aa).

Over residues 1–21 the composition is skewed to low complexity; it reads MLTSFKSSSSSSEDATATTTE. The disordered stretch occupies residues 1-26; the sequence is MLTSFKSSSSSSEDATATTTENPPPL. One can recognise a GRAS domain in the interval 32 to 445; the sequence is SAATSASHHL…RPLFSVSSWK (414 aa). The leucine repeat I (LRI) stretch occupies residues 39–127; sequence HHLRRLLFTA…STVFTSSVCK (89 aa). Residues 146–217 form a VHIID region; sequence YLWLNQLTPF…SPPPSLRITG (72 aa). The VHIID motif lies at 179–183; the sequence is LHILD. Positions 227-259 are leucine repeat II (LRII); it reads RTGDRLTRFADSLGLQFQFHTLVIVEEDLAGLL. Residues 275-366 are PFYRE; sequence IAVNCVHFLH…QRWFGKEILD (92 aa). The interval 369–445 is SAW; that stretch reads AAEETERKQR…RPLFSVSSWK (77 aa).

It belongs to the GRAS family. As to expression, expressed in roots and flowers.

The protein resides in the nucleus. Its function is as follows. Probable transcription factor required for axillary (lateral) shoot meristem formation during vegetative development. Seems to act upstream of REVOLUTA. The polypeptide is Scarecrow-like protein 18 (SCL18) (Arabidopsis thaliana (Mouse-ear cress)).